A 406-amino-acid chain; its full sequence is Ascaroside receptor GPR2 (406 aa).

Residues 1-29 (MTQLPYLLDRRGGALAAPATAWGDMMLNR) are Extracellular-facing. Residues 30–50 (ALFSVALLSSVGSAWVVLSYA) form a helical membrane-spanning segment. Over 51–61 (CIKELRSYRHQ) the chain is Cytoplasmic. A helical transmembrane segment spans residues 62 to 82 (LILGLAISDLLMSLNFMFSAG). The Extracellular portion of the chain corresponds to 83–107 (WNVAGGDLALEESRTACSVNGFLTQ). Cysteines 99 and 173 form a disulfide. Residues 108-128 (VFVVQTDWWILVIAIATYIIL) form a helical membrane-spanning segment. Residues 129-143 (GNFKTQSQFIQTHVW) are Cytoplasmic-facing. A helical transmembrane segment spans residues 144-164 (IPWVGPWVLSIIIAAICHGVL). Residues 165-185 (GYGYIGGWCWLTSDLMRLLIN) are Extracellular-facing. Residues 186–206 (FIPRWLIVIAIALIYIRLYMI) form a helical membrane-spanning segment. The Cytoplasmic portion of the chain corresponds to 207–326 (VRKARKWDIE…AAQLKRIAKK (120 aa)). A helical membrane pass occupies residues 327–347 (MMVYPVAYAIIWACPTAIRIY). Topologically, residues 348 to 356 (QGTTGSRAP) are extracellular. Residues 357–377 (LWITIVDKSCIVIQGLVDAVV) form a helical membrane-spanning segment. The Cytoplasmic portion of the chain corresponds to 378-406 (YGLNERAWQGWRDHIRRIIYKNEGGRIIG).

This sequence belongs to the G-protein coupled receptor 1 family. As to quaternary structure, interacts with ascaroside receptor GPR3; may form a functional heterodimer. Interacts with guanine nucleotide-binding protein alpha GPA2; to activate adenylate cyclase and positively regulate nematode trap formation.

The protein localises to the cell membrane. Its function is as follows. G protein-coupled receptor that senses nematode ascaroside pheromones and signals via adenylate cyclase to positively regulate trap formation for nematode capture. This is Ascaroside receptor GPR2 from Arthrobotrys oligospora (strain ATCC 24927 / CBS 115.81 / DSM 1491) (Nematode-trapping fungus).